The primary structure comprises 217 residues: Large ribosomal subunit protein uL29m (217 aa).

Belongs to the universal ribosomal protein uL29 family. Component of the mitochondrial large ribosomal subunit. Mature mitochondrial ribosomes consist of a small (37S) and a large (54S) subunit. The 37S subunit contains at least 33 different proteins and 1 molecule of RNA (15S). The 54S subunit contains at least 45 different proteins and 1 molecule of RNA (21S).

Its subcellular location is the mitochondrion. The protein is Large ribosomal subunit protein uL29m (mrpl4) of Aspergillus fumigatus (strain ATCC MYA-4609 / CBS 101355 / FGSC A1100 / Af293) (Neosartorya fumigata).